A 167-amino-acid polypeptide reads, in one-letter code: MIRIIGVDPGLRRTGWGIIETLGNSLRFIASGTITSDGDMDLASRLCQLHDGLAEVVHSYQPHEAAVEQTFVNKDATATLKLGQARGIAMLVPARAGLRVAEYAPNAVKKAVIGVGHGEKQQIHMMLKVLMPKAEFKGNDAADALAIAICHAHNRQAITSRLAALAG.

Catalysis depends on residues Asp-8, Glu-68, and Asp-140. Mg(2+) is bound by residues Asp-8, Glu-68, and Asp-140.

It belongs to the RuvC family. As to quaternary structure, homodimer which binds Holliday junction (HJ) DNA. The HJ becomes 2-fold symmetrical on binding to RuvC with unstacked arms; it has a different conformation from HJ DNA in complex with RuvA. In the full resolvosome a probable DNA-RuvA(4)-RuvB(12)-RuvC(2) complex forms which resolves the HJ. Requires Mg(2+) as cofactor.

The protein resides in the cytoplasm. The enzyme catalyses Endonucleolytic cleavage at a junction such as a reciprocal single-stranded crossover between two homologous DNA duplexes (Holliday junction).. In terms of biological role, the RuvA-RuvB-RuvC complex processes Holliday junction (HJ) DNA during genetic recombination and DNA repair. Endonuclease that resolves HJ intermediates. Cleaves cruciform DNA by making single-stranded nicks across the HJ at symmetrical positions within the homologous arms, yielding a 5'-phosphate and a 3'-hydroxyl group; requires a central core of homology in the junction. The consensus cleavage sequence is 5'-(A/T)TT(C/G)-3'. Cleavage occurs on the 3'-side of the TT dinucleotide at the point of strand exchange. HJ branch migration catalyzed by RuvA-RuvB allows RuvC to scan DNA until it finds its consensus sequence, where it cleaves and resolves the cruciform DNA. The protein is Crossover junction endodeoxyribonuclease RuvC of Sinorhizobium medicae (strain WSM419) (Ensifer medicae).